A 227-amino-acid chain; its full sequence is Cytochrome c oxidase subunit 2 (227 aa).

Over 1 to 14 (MAYPMQLGFQDATS) the chain is Mitochondrial intermembrane. The helical transmembrane segment at 15-45 (PIMEELLHFHDHTLMIVFLISSLVLYIISLM) threads the bilayer. The Mitochondrial matrix segment spans residues 46-59 (LTTKLTHTSTMDAQ). The helical transmembrane segment at 60 to 87 (EVETVWTILPAIILILIALPSLRILYMM) threads the bilayer. The Mitochondrial intermembrane segment spans residues 88–227 (DEINNPSLTV…HFEEWSASMS (140 aa)). Histidine 161, cysteine 196, glutamate 198, cysteine 200, histidine 204, and methionine 207 together coordinate Cu cation. Glutamate 198 provides a ligand contact to Mg(2+).

It belongs to the cytochrome c oxidase subunit 2 family. As to quaternary structure, component of the cytochrome c oxidase (complex IV, CIV), a multisubunit enzyme composed of 14 subunits. The complex is composed of a catalytic core of 3 subunits MT-CO1, MT-CO2 and MT-CO3, encoded in the mitochondrial DNA, and 11 supernumerary subunits COX4I, COX5A, COX5B, COX6A, COX6B, COX6C, COX7A, COX7B, COX7C, COX8 and NDUFA4, which are encoded in the nuclear genome. The complex exists as a monomer or a dimer and forms supercomplexes (SCs) in the inner mitochondrial membrane with NADH-ubiquinone oxidoreductase (complex I, CI) and ubiquinol-cytochrome c oxidoreductase (cytochrome b-c1 complex, complex III, CIII), resulting in different assemblies (supercomplex SCI(1)III(2)IV(1) and megacomplex MCI(2)III(2)IV(2)). Found in a complex with TMEM177, COA6, COX18, COX20, SCO1 and SCO2. Interacts with TMEM177 in a COX20-dependent manner. Interacts with COX20. Interacts with COX16. Cu cation is required as a cofactor.

Its subcellular location is the mitochondrion inner membrane. It catalyses the reaction 4 Fe(II)-[cytochrome c] + O2 + 8 H(+)(in) = 4 Fe(III)-[cytochrome c] + 2 H2O + 4 H(+)(out). Its function is as follows. Component of the cytochrome c oxidase, the last enzyme in the mitochondrial electron transport chain which drives oxidative phosphorylation. The respiratory chain contains 3 multisubunit complexes succinate dehydrogenase (complex II, CII), ubiquinol-cytochrome c oxidoreductase (cytochrome b-c1 complex, complex III, CIII) and cytochrome c oxidase (complex IV, CIV), that cooperate to transfer electrons derived from NADH and succinate to molecular oxygen, creating an electrochemical gradient over the inner membrane that drives transmembrane transport and the ATP synthase. Cytochrome c oxidase is the component of the respiratory chain that catalyzes the reduction of oxygen to water. Electrons originating from reduced cytochrome c in the intermembrane space (IMS) are transferred via the dinuclear copper A center (CU(A)) of subunit 2 and heme A of subunit 1 to the active site in subunit 1, a binuclear center (BNC) formed by heme A3 and copper B (CU(B)). The BNC reduces molecular oxygen to 2 water molecules using 4 electrons from cytochrome c in the IMS and 4 protons from the mitochondrial matrix. This chain is Cytochrome c oxidase subunit 2 (MT-CO2), found in Antilocapra americana (Pronghorn).